The sequence spans 327 residues: Clavesin-2 (327 aa).

One can recognise a CRAL-TRIO domain in the interval 96-257 (IKQALKDGFP…EFGGMLPPYD (162 aa)). Residues 287-327 (EVEKELSPKSMKRSQSVVDPTVLKRMDKNEEENMQPLLSLD) are disordered. At serine 325 the chain carries Phosphoserine.

As to quaternary structure, forms a complex with clathrin heavy chain and gamma-adaptin.

Its subcellular location is the golgi apparatus. It localises to the trans-Golgi network membrane. It is found in the cytoplasmic vesicle. The protein resides in the clathrin-coated vesicle. The protein localises to the early endosome membrane. Required for normal morphology of late endosomes and/or lysosomes in neurons. Binds phosphatidylinositol 3,5-bisphosphate (PtdIns(3,5)P2). This is Clavesin-2 (CLVS2) from Homo sapiens (Human).